A 327-amino-acid polypeptide reads, in one-letter code: Aquaporin-1 (327 aa).

The tract at residues 1-34 (MSSNDSNDTDKQHTRLDPTGVDDAYIPPEQPETK) is disordered. At 1–48 (MSSNDSNDTDKQHTRLDPTGVDDAYIPPEQPETKHHRFKISKDTLRNH) the chain is on the cytoplasmic side. A helical membrane pass occupies residues 49-69 (FIAAAGEFCGTFMFLWCAYVI). At 70–91 (CNVANHDVALVAAPDGSHPGQL) the chain is on the extracellular side. Residues 92-112 (IMIAIGFGFSVMFSIWCFAGV) form a helical membrane-spanning segment. Residues 113–136 (SGGALNPAVSLSLCLARAVSPTRC) are Cytoplasmic-facing. An NPA 1 motif is present at residues 118–120 (NPA). The chain crosses the membrane as a helical span at residues 137-157 (VVMWVSQIVAGMAAGGAASAM). The Extracellular segment spans residues 158–176 (TPGEVLFANSLGLGCSRTR). Residues 177 to 197 (GLFLEMFGTAILCLTVLMTAV) traverse the membrane as a helical segment. Over 198 to 203 (EKRETN) the chain is Cytoplasmic. Residues 204–224 (FMAALPIGISLFIAHVALTAY) form a helical membrane-spanning segment. Residues 225–248 (TGTGVNPARSLGAAVAARYFPHYH) are Extracellular-facing. Positions 230–232 (NPA) match the NPA 2 motif. The helical transmembrane segment at 249–269 (WIYWIGPLLGSILAWSVWQLL) threads the bilayer. Residues 270–327 (QILDYTTYVTAEKAASTKEKAQKKVKPAVPLLWLKSNFSLLFFISRSLALNVIIFGKN) lie on the Cytoplasmic side of the membrane.

The protein belongs to the MIP/aquaporin (TC 1.A.8) family.

It localises to the endoplasmic reticulum membrane. It is found in the cell membrane. In terms of biological role, water channel required to facilitate the transport of water across membranes. Involved in sporulation, freeze tolerance and osmotolerance. Is non-functional in most laboratory strains. This chain is Aquaporin-1 (AQY1), found in Saccharomyces cerevisiae (strain Lalvin EC1118 / Prise de mousse) (Baker's yeast).